We begin with the raw amino-acid sequence, 374 residues long: UDP-N-acetylglucosamine--N-acetylmuramyl-(pentapeptide) pyrophosphoryl-undecaprenol N-acetylglucosamine transferase (374 aa).

Residues 13–15, Asn124, Arg165, Ser193, and Gln294 contribute to the UDP-N-acetyl-alpha-D-glucosamine site; that span reads TGG.

It belongs to the glycosyltransferase 28 family. MurG subfamily.

The protein resides in the cell inner membrane. The catalysed reaction is di-trans,octa-cis-undecaprenyl diphospho-N-acetyl-alpha-D-muramoyl-L-alanyl-D-glutamyl-meso-2,6-diaminopimeloyl-D-alanyl-D-alanine + UDP-N-acetyl-alpha-D-glucosamine = di-trans,octa-cis-undecaprenyl diphospho-[N-acetyl-alpha-D-glucosaminyl-(1-&gt;4)]-N-acetyl-alpha-D-muramoyl-L-alanyl-D-glutamyl-meso-2,6-diaminopimeloyl-D-alanyl-D-alanine + UDP + H(+). It functions in the pathway cell wall biogenesis; peptidoglycan biosynthesis. Functionally, cell wall formation. Catalyzes the transfer of a GlcNAc subunit on undecaprenyl-pyrophosphoryl-MurNAc-pentapeptide (lipid intermediate I) to form undecaprenyl-pyrophosphoryl-MurNAc-(pentapeptide)GlcNAc (lipid intermediate II). The protein is UDP-N-acetylglucosamine--N-acetylmuramyl-(pentapeptide) pyrophosphoryl-undecaprenol N-acetylglucosamine transferase of Rhizobium rhizogenes (strain K84 / ATCC BAA-868) (Agrobacterium radiobacter).